Here is a 212-residue protein sequence, read N- to C-terminus: ATP-dependent Clp protease proteolytic subunit (212 aa).

Ser114 acts as the Nucleophile in catalysis. His139 is an active-site residue.

The protein belongs to the peptidase S14 family. In terms of assembly, fourteen ClpP subunits assemble into 2 heptameric rings which stack back to back to give a disk-like structure with a central cavity, resembling the structure of eukaryotic proteasomes.

The protein localises to the cytoplasm. The catalysed reaction is Hydrolysis of proteins to small peptides in the presence of ATP and magnesium. alpha-casein is the usual test substrate. In the absence of ATP, only oligopeptides shorter than five residues are hydrolyzed (such as succinyl-Leu-Tyr-|-NHMec, and Leu-Tyr-Leu-|-Tyr-Trp, in which cleavage of the -Tyr-|-Leu- and -Tyr-|-Trp bonds also occurs).. Cleaves peptides in various proteins in a process that requires ATP hydrolysis. Has a chymotrypsin-like activity. Plays a major role in the degradation of misfolded proteins. This is ATP-dependent Clp protease proteolytic subunit from Laribacter hongkongensis (strain HLHK9).